We begin with the raw amino-acid sequence, 128 residues long: uncharacterized protein (128 aa).

The interval 1-26 (MNSATSETTTNTGAAETTTSTGAAET) is disordered. Residues 105-127 (IANGLLTNNGISVFISTVLLAIV) form a helical membrane-spanning segment.

It belongs to the flocculin family.

It localises to the membrane. This is an uncharacterized protein from Saccharomyces cerevisiae (strain ATCC 204508 / S288c) (Baker's yeast).